The following is a 435-amino-acid chain: Probable alpha-galactosidase B (435 aa).

An N-terminal signal peptide occupies residues 1 to 18 (MLTSLSLTALALLPSANA). Residues Cys-41 and Cys-73 are joined by a disulfide bond. Asn-81 carries an N-linked (GlcNAc...) asparagine glycan. Cys-123 and Cys-153 are disulfide-bonded. Asp-151 serves as the catalytic Nucleophile. Residues Asn-158 and Asn-176 are each glycosylated (N-linked (GlcNAc...) asparagine). A substrate-binding site is contributed by 221–225 (DWGQA). N-linked (GlcNAc...) asparagine glycosylation is present at Asn-232. Asp-243 serves as the catalytic Proton donor. Residue Asn-378 is glycosylated (N-linked (GlcNAc...) asparagine).

It belongs to the glycosyl hydrolase 27 family.

The protein localises to the secreted. The enzyme catalyses Hydrolysis of terminal, non-reducing alpha-D-galactose residues in alpha-D-galactosides, including galactose oligosaccharides, galactomannans and galactolipids.. Hydrolyzes a variety of simple alpha-D-galactoside as well as more complex molecules such as oligosaccharides and polysaccharides. The sequence is that of Probable alpha-galactosidase B (agl1) from Penicillium simplicissimum.